The primary structure comprises 221 residues: Pectate lyase C (221 aa).

An N-terminal signal peptide occupies residues 1–27; that stretch reads MKKIVSILFMFGLVMGFSQFQPSTVFA.

The protein belongs to the polysaccharide lyase 3 family. Requires Ca(2+) as cofactor.

The protein resides in the secreted. The catalysed reaction is Eliminative cleavage of (1-&gt;4)-alpha-D-galacturonan to give oligosaccharides with 4-deoxy-alpha-D-galact-4-enuronosyl groups at their non-reducing ends.. The enzyme catalyses Eliminative cleavage of (1-&gt;4)-alpha-D-galacturonan methyl ester to give oligosaccharides with 4-deoxy-6-O-methyl-alpha-D-galact-4-enuronosyl groups at their non-reducing ends.. It participates in glycan metabolism; pectin degradation; 2-dehydro-3-deoxy-D-gluconate from pectin: step 2/5. In terms of biological role, catalyzes the depolymerization of both polygalacturonate and pectins of methyl esterification degree from 22 to 89%, with an endo mode of action. In contrast to the majority of pectate lyases, displays high activity on highly methylated pectins. Is also able to cleave trigalacturonate to galacturonic acid and unsaturated digalacturonate. The sequence is that of Pectate lyase C (pelC) from Bacillus subtilis (strain 168).